A 389-amino-acid chain; its full sequence is Arrestin-C (389 aa).

Belongs to the arrestin family. Retina and pineal gland.

In terms of biological role, may play a role in an as yet undefined retina-specific signal transduction. Could bind to photoactivated-phosphorylated red/green opsins. This is Arrestin-C (arr3) from Lithobates pipiens (Northern leopard frog).